Here is a 279-residue protein sequence, read N- to C-terminus: Inorganic pyrophosphatase 2 (279 aa).

Residue D12 is the Nucleophile of the active site. The Mg(2+) site is built by D12 and D14. The active-site Proton donor is D14. Residues D23 and D98 each coordinate substrate. D182 lines the Mg(2+) pocket.

Belongs to the HAD-like hydrolase superfamily. Tetramer. It depends on Mg(2+) as a cofactor.

It catalyses the reaction diphosphate + H2O = 2 phosphate + H(+). Catalyzes the specific cleavage of pyrophosphate. The sequence is that of Inorganic pyrophosphatase 2 from Arabidopsis thaliana (Mouse-ear cress).